Here is a 935-residue protein sequence, read N- to C-terminus: Phosphoenolpyruvate carboxylase (935 aa).

Catalysis depends on residues H161 and K593.

Belongs to the PEPCase type 1 family. Requires Mg(2+) as cofactor.

It carries out the reaction oxaloacetate + phosphate = phosphoenolpyruvate + hydrogencarbonate. Functionally, forms oxaloacetate, a four-carbon dicarboxylic acid source for the tricarboxylic acid cycle. The polypeptide is Phosphoenolpyruvate carboxylase (Mycolicibacterium paratuberculosis (strain ATCC BAA-968 / K-10) (Mycobacterium paratuberculosis)).